Consider the following 457-residue polypeptide: ERV-H1 provirus ancestral Env polyprotein (457 aa).

The signal sequence occupies residues 1–35; the sequence is MIFAGKAPSNTSTLMKFYSLILYSLLFSFPFLCHP. N-linked (GlcNAc...) asparagine glycosylation is found at Asn10 and Asn47. Positions 64 to 67 match the CXXC motif; that stretch reads CWLC. N-linked (GlcNAc...) asparagine glycosylation is found at Asn197, Asn222, Asn265, Asn283, Asn352, and Asn370. The interval 388-408 is fusion peptide; it reads VIPLIPLMFGLGLSASTIALS.

It belongs to the gamma type-C retroviral envelope protein family. HERV class-I H env subfamily. As to quaternary structure, the surface (SU) and transmembrane (TM) proteins form a heterodimer. SU and TM are attached by noncovalent interactions or by a labile interchain disulfide bond. Post-translationally, specific enzymatic cleavages in vivo yield the mature SU and TM proteins. In terms of processing, the CXXC motif is highly conserved across a broad range of retroviral envelope proteins. It is thought to participate in the formation of a labile disulfide bond possibly with the CX6CC motif present in the transmembrane protein.

It localises to the virion. Its function is as follows. Retroviral envelope proteins mediate receptor recognition and membrane fusion during early infection. Endogenous envelope proteins may have kept, lost or modified their original function during evolution. Functionally, SU mediates receptor recognition. In terms of biological role, TM anchors the envelope heterodimer to the viral membrane through one transmembrane domain. The other hydrophobic domain, called fusion peptide, mediates fusion of the viral membrane with the target cell membrane. The polypeptide is ERV-H1 provirus ancestral Env polyprotein (Pan troglodytes (Chimpanzee)).